The primary structure comprises 459 residues: uncharacterized protein (459 aa).

The TRAM domain maps to 6 to 64 (KNKQEKNIIITIKRLGINGEGIGYYKKKIIFIPGALPNEVVVAKIVDRHPHYLEGELVR). S-adenosyl-L-methionine-binding residues include Q289, Y318, E339, and D387. Catalysis depends on C414, which acts as the Nucleophile.

Belongs to the class I-like SAM-binding methyltransferase superfamily. RNA M5U methyltransferase family.

This is an uncharacterized protein from Lactobacillus johnsonii (strain CNCM I-12250 / La1 / NCC 533).